The primary structure comprises 131 residues: Fluoride-specific ion channel FluC (131 aa).

The next 4 helical transmembrane spans lie at 4 to 24 (LWIMIGSALGGAARFWVTGFV), 30 to 50 (GIFPWGTVLINVSGSFLIGFF), 68 to 88 (LFVMIGLCGGFTTFSSFSLQT), and 104 to 124 (IALSVVFCLLAVWLGHVVAVA). 2 residues coordinate Na(+): glycine 76 and threonine 79.

This sequence belongs to the fluoride channel Fluc/FEX (TC 1.A.43) family.

The protein resides in the cell inner membrane. The enzyme catalyses fluoride(in) = fluoride(out). With respect to regulation, na(+) is not transported, but it plays an essential structural role and its presence is essential for fluoride channel function. Fluoride-specific ion channel. Important for reducing fluoride concentration in the cell, thus reducing its toxicity. The sequence is that of Fluoride-specific ion channel FluC from Methylocella silvestris (strain DSM 15510 / CIP 108128 / LMG 27833 / NCIMB 13906 / BL2).